The primary structure comprises 295 residues: Shikimate dehydrogenase (NADP(+)) (295 aa).

Residues 24 to 26 (SRS) and threonine 71 contribute to the shikimate site. Residue lysine 75 is the Proton acceptor of the active site. Position 87 (glutamate 87) interacts with NADP(+). The shikimate site is built by asparagine 96 and aspartate 111. Residues 136–140 (GAGGA), 160–165 (NRTASR), and methionine 233 contribute to the NADP(+) site. Residue tyrosine 235 participates in shikimate binding. Residue glycine 256 participates in NADP(+) binding.

The protein belongs to the shikimate dehydrogenase family. In terms of assembly, homodimer.

It carries out the reaction shikimate + NADP(+) = 3-dehydroshikimate + NADPH + H(+). It functions in the pathway metabolic intermediate biosynthesis; chorismate biosynthesis; chorismate from D-erythrose 4-phosphate and phosphoenolpyruvate: step 4/7. Its function is as follows. Involved in the biosynthesis of the chorismate, which leads to the biosynthesis of aromatic amino acids. Catalyzes the reversible NADPH linked reduction of 3-dehydroshikimate (DHSA) to yield shikimate (SA). In Cupriavidus taiwanensis (strain DSM 17343 / BCRC 17206 / CCUG 44338 / CIP 107171 / LMG 19424 / R1) (Ralstonia taiwanensis (strain LMG 19424)), this protein is Shikimate dehydrogenase (NADP(+)).